We begin with the raw amino-acid sequence, 352 residues long: UDP-3-O-acylglucosamine N-acyltransferase (352 aa).

Histidine 246 (proton acceptor) is an active-site residue.

Belongs to the transferase hexapeptide repeat family. LpxD subfamily. As to quaternary structure, homotrimer.

The enzyme catalyses a UDP-3-O-[(3R)-3-hydroxyacyl]-alpha-D-glucosamine + a (3R)-hydroxyacyl-[ACP] = a UDP-2-N,3-O-bis[(3R)-3-hydroxyacyl]-alpha-D-glucosamine + holo-[ACP] + H(+). Its pathway is bacterial outer membrane biogenesis; LPS lipid A biosynthesis. In terms of biological role, catalyzes the N-acylation of UDP-3-O-acylglucosamine using 3-hydroxyacyl-ACP as the acyl donor. Is involved in the biosynthesis of lipid A, a phosphorylated glycolipid that anchors the lipopolysaccharide to the outer membrane of the cell. The sequence is that of UDP-3-O-acylglucosamine N-acyltransferase from Chlorobium luteolum (strain DSM 273 / BCRC 81028 / 2530) (Pelodictyon luteolum).